The chain runs to 112 residues: MIEIISNITSQDNVSTNKNNSFFNIINSSYLLKSTFSRFNQYFLNKKIEFDHIIAEEKKENKDKIVISSHFIVNYLLNILNQKNTDFNSKNFNNSKNDQIKKKKIDNNQVNL.

Residues 90–112 (KNFNNSKNDQIKKKKIDNNQVNL) form a disordered region.

This is an uncharacterized protein from Buchnera aphidicola subsp. Acyrthosiphon pisum (strain APS) (Acyrthosiphon pisum symbiotic bacterium).